A 224-amino-acid polypeptide reads, in one-letter code: Deoxyribose-phosphate aldolase (224 aa).

Asp-92 (proton donor/acceptor) is an active-site residue. Residue Lys-155 is the Schiff-base intermediate with acetaldehyde of the active site. Lys-184 serves as the catalytic Proton donor/acceptor.

This sequence belongs to the DeoC/FbaB aldolase family. DeoC type 1 subfamily.

The protein resides in the cytoplasm. It carries out the reaction 2-deoxy-D-ribose 5-phosphate = D-glyceraldehyde 3-phosphate + acetaldehyde. The protein operates within carbohydrate degradation; 2-deoxy-D-ribose 1-phosphate degradation; D-glyceraldehyde 3-phosphate and acetaldehyde from 2-deoxy-alpha-D-ribose 1-phosphate: step 2/2. In terms of biological role, catalyzes a reversible aldol reaction between acetaldehyde and D-glyceraldehyde 3-phosphate to generate 2-deoxy-D-ribose 5-phosphate. The polypeptide is Deoxyribose-phosphate aldolase (Halalkalibacterium halodurans (strain ATCC BAA-125 / DSM 18197 / FERM 7344 / JCM 9153 / C-125) (Bacillus halodurans)).